The following is a 186-amino-acid chain: ATP synthase subunit delta (186 aa).

The protein belongs to the ATPase delta chain family. F-type ATPases have 2 components, F(1) - the catalytic core - and F(0) - the membrane proton channel. F(1) has five subunits: alpha(3), beta(3), gamma(1), delta(1), epsilon(1). F(0) has three main subunits: a(1), b(2) and c(10-14). The alpha and beta chains form an alternating ring which encloses part of the gamma chain. F(1) is attached to F(0) by a central stalk formed by the gamma and epsilon chains, while a peripheral stalk is formed by the delta and b chains.

Its subcellular location is the cell membrane. Functionally, f(1)F(0) ATP synthase produces ATP from ADP in the presence of a proton or sodium gradient. F-type ATPases consist of two structural domains, F(1) containing the extramembraneous catalytic core and F(0) containing the membrane proton channel, linked together by a central stalk and a peripheral stalk. During catalysis, ATP synthesis in the catalytic domain of F(1) is coupled via a rotary mechanism of the central stalk subunits to proton translocation. Its function is as follows. This protein is part of the stalk that links CF(0) to CF(1). It either transmits conformational changes from CF(0) to CF(1) or is implicated in proton conduction. The sequence is that of ATP synthase subunit delta from Mycoplasmopsis agalactiae (strain NCTC 10123 / CIP 59.7 / PG2) (Mycoplasma agalactiae).